The primary structure comprises 276 residues: Rhomboid protease GlpG (276 aa).

A run of 6 helical transmembrane segments spans residues 94-114 (GPVTWVMMIACVVVFIAMQIL), 142-162 (ALMHFSLMHILFNLLWWWYLG), 169-189 (LGSGKLIVITLISALLSGYVQ), 192-212 (FSGPWFGGLSGVVYALMGYVW), 229-249 (LIIFALIWIVAGWFDLFGMSM), and 250-270 (ANGAHIAGLAVGLAMAFVDSL). Serine 201 functions as the Nucleophile in the catalytic mechanism. Histidine 254 is a catalytic residue.

This sequence belongs to the peptidase S54 family.

It localises to the cell inner membrane. The catalysed reaction is Cleaves type-1 transmembrane domains using a catalytic dyad composed of serine and histidine that are contributed by different transmembrane domains.. In terms of biological role, rhomboid-type serine protease that catalyzes intramembrane proteolysis. The chain is Rhomboid protease GlpG from Escherichia coli O45:K1 (strain S88 / ExPEC).